A 322-amino-acid chain; its full sequence is Cytochrome c biogenesis protein CcsA (322 aa).

The next 8 helical transmembrane spans lie at 19 to 39 (NAIFCNLLLTMCLYWFSLIIV), 43 to 63 (LICNLAKFSAVNSNVILFFYL), 72 to 92 (FFPLSNLYESLMFLSCLLLFI), 104 to 124 (VIGALVLPLIVLVQGFASLSL), 150 to 170 (MMLSYATLLLGSLFSILYLVL), 230 to 250 (TIGIGFPFLTMGIISGAVWAN), 264 to 281 (TWALITWLIFASYLHARL), and 291 to 311 (AFLGSFGFFIVWVCYLGVNFL).

This sequence belongs to the CcmF/CycK/Ccl1/NrfE/CcsA family. May interact with Ccs1.

Its subcellular location is the plastid. The protein resides in the chloroplast thylakoid membrane. Its function is as follows. Required during biogenesis of c-type cytochromes (cytochrome c6 and cytochrome f) at the step of heme attachment. This chain is Cytochrome c biogenesis protein CcsA, found in Heterosigma akashiwo (strain NIES-293 / 8280G21-1).